A 248-amino-acid chain; its full sequence is Acetoacetyl-CoA reductase (248 aa).

NADP(+) is bound by residues 14-16, Arg42, and 90-94; these read GGI and NAGIT. Substrate is bound by residues Asp96 and 149-152; that span reads QFGQ. The active-site Proton acceptor is the Tyr155. 185-188 serves as a coordination point for NADP(+); it reads PGYT. Residues 186–187 and Arg197 contribute to the substrate site; that span reads GY.

Belongs to the short-chain dehydrogenases/reductases (SDR) family.

The protein localises to the cytoplasm. It carries out the reaction a (3R)-3-hydroxyacyl-CoA + NADP(+) = a 3-oxoacyl-CoA + NADPH + H(+). The protein operates within biopolymer metabolism; poly-(R)-3-hydroxybutanoate biosynthesis. The protein is Acetoacetyl-CoA reductase (phaB) of Acinetobacter sp. (strain RA3849).